The following is a 203-amino-acid chain: 3-isopropylmalate dehydratase small subunit (203 aa).

The protein belongs to the LeuD family. LeuD type 1 subfamily. Heterodimer of LeuC and LeuD.

It carries out the reaction (2R,3S)-3-isopropylmalate = (2S)-2-isopropylmalate. Its pathway is amino-acid biosynthesis; L-leucine biosynthesis; L-leucine from 3-methyl-2-oxobutanoate: step 2/4. Its function is as follows. Catalyzes the isomerization between 2-isopropylmalate and 3-isopropylmalate, via the formation of 2-isopropylmaleate. This is 3-isopropylmalate dehydratase small subunit from Phenylobacterium zucineum (strain HLK1).